A 241-amino-acid polypeptide reads, in one-letter code: Urease accessory protein UreF (241 aa).

Belongs to the UreF family. As to quaternary structure, ureD, UreF and UreG form a complex that acts as a GTP-hydrolysis-dependent molecular chaperone, activating the urease apoprotein by helping to assemble the nickel containing metallocenter of UreC. The UreE protein probably delivers the nickel.

It is found in the cytoplasm. In terms of biological role, required for maturation of urease via the functional incorporation of the urease nickel metallocenter. The protein is Urease accessory protein UreF of Rhodopseudomonas palustris (strain BisB18).